A 657-amino-acid polypeptide reads, in one-letter code: Protein translocase subunit SecA 2 (657 aa).

ATP contacts are provided by residues Gln-93, 111–115 (GEGKT), and Asp-531.

It belongs to the SecA family. As to quaternary structure, monomer and homodimer. Part of the essential Sec protein translocation apparatus which comprises SecA, SecYEG and auxiliary proteins SecDF. Other proteins may also be involved.

The protein localises to the cell inner membrane. It is found in the cytoplasm. The enzyme catalyses ATP + H2O + cellular proteinSide 1 = ADP + phosphate + cellular proteinSide 2.. Functionally, part of the Sec protein translocase complex. Interacts with the SecYEG preprotein conducting channel. Has a central role in coupling the hydrolysis of ATP to the transfer of proteins into and across the cell membrane, serving as an ATP-driven molecular motor driving the stepwise translocation of polypeptide chains across the membrane. In Rhodopirellula baltica (strain DSM 10527 / NCIMB 13988 / SH1), this protein is Protein translocase subunit SecA 2.